The chain runs to 430 residues: Threonine synthase (430 aa).

An N6-(pyridoxal phosphate)lysine modification is found at K108.

It belongs to the threonine synthase family. Requires pyridoxal 5'-phosphate as cofactor.

The catalysed reaction is O-phospho-L-homoserine + H2O = L-threonine + phosphate. Its pathway is amino-acid biosynthesis; L-threonine biosynthesis; L-threonine from L-aspartate: step 5/5. Functionally, catalyzes the gamma-elimination of phosphate from L-phosphohomoserine and the beta-addition of water to produce L-threonine. This is Threonine synthase (thrC) from Buchnera aphidicola subsp. Baizongia pistaciae (strain Bp).